A 372-amino-acid chain; its full sequence is 4-hydroxy-3-methylbut-2-en-1-yl diphosphate synthase (flavodoxin) (372 aa).

[4Fe-4S] cluster-binding residues include C270, C273, C305, and E312.

It belongs to the IspG family. [4Fe-4S] cluster serves as cofactor.

It carries out the reaction (2E)-4-hydroxy-3-methylbut-2-enyl diphosphate + oxidized [flavodoxin] + H2O + 2 H(+) = 2-C-methyl-D-erythritol 2,4-cyclic diphosphate + reduced [flavodoxin]. The protein operates within isoprenoid biosynthesis; isopentenyl diphosphate biosynthesis via DXP pathway; isopentenyl diphosphate from 1-deoxy-D-xylulose 5-phosphate: step 5/6. Its function is as follows. Converts 2C-methyl-D-erythritol 2,4-cyclodiphosphate (ME-2,4cPP) into 1-hydroxy-2-methyl-2-(E)-butenyl 4-diphosphate. The protein is 4-hydroxy-3-methylbut-2-en-1-yl diphosphate synthase (flavodoxin) of Aliivibrio fischeri (strain ATCC 700601 / ES114) (Vibrio fischeri).